Here is a 442-residue protein sequence, read N- to C-terminus: Serine--tRNA ligase (442 aa).

244-246 provides a ligand contact to L-serine; it reads TAE. Residue 275–277 coordinates ATP; it reads RAE. Position 298 (E298) interacts with L-serine. 365–368 provides a ligand contact to ATP; it reads EISS. An L-serine-binding site is contributed by S400.

The protein belongs to the class-II aminoacyl-tRNA synthetase family. Type-1 seryl-tRNA synthetase subfamily. In terms of assembly, homodimer. The tRNA molecule binds across the dimer.

The protein resides in the cytoplasm. The enzyme catalyses tRNA(Ser) + L-serine + ATP = L-seryl-tRNA(Ser) + AMP + diphosphate + H(+). It catalyses the reaction tRNA(Sec) + L-serine + ATP = L-seryl-tRNA(Sec) + AMP + diphosphate + H(+). Its pathway is aminoacyl-tRNA biosynthesis; selenocysteinyl-tRNA(Sec) biosynthesis; L-seryl-tRNA(Sec) from L-serine and tRNA(Sec): step 1/1. Functionally, catalyzes the attachment of serine to tRNA(Ser). Is also able to aminoacylate tRNA(Sec) with serine, to form the misacylated tRNA L-seryl-tRNA(Sec), which will be further converted into selenocysteinyl-tRNA(Sec). This is Serine--tRNA ligase from Bradyrhizobium sp. (strain BTAi1 / ATCC BAA-1182).